We begin with the raw amino-acid sequence, 875 residues long: Valine--tRNA ligase (875 aa).

Positions 45–55 (PNVTGVLHMGH) match the 'HIGH' region motif. The short motif at 524–528 (KMSKS) is the 'KMSKS' region element. Lys527 provides a ligand contact to ATP. A coiled-coil region spans residues 803–837 (VKSLIDKTKELIRLEKQLEKYKMLNISVSKKLENE).

It belongs to the class-I aminoacyl-tRNA synthetase family. ValS type 1 subfamily. Monomer.

Its subcellular location is the cytoplasm. It carries out the reaction tRNA(Val) + L-valine + ATP = L-valyl-tRNA(Val) + AMP + diphosphate. Its function is as follows. Catalyzes the attachment of valine to tRNA(Val). As ValRS can inadvertently accommodate and process structurally similar amino acids such as threonine, to avoid such errors, it has a 'posttransfer' editing activity that hydrolyzes mischarged Thr-tRNA(Val) in a tRNA-dependent manner. This chain is Valine--tRNA ligase, found in Borreliella burgdorferi (strain ATCC 35210 / DSM 4680 / CIP 102532 / B31) (Borrelia burgdorferi).